Here is a 367-residue protein sequence, read N- to C-terminus: Cytochrome-c peroxidase IdrP2 (367 aa).

The signal sequence occupies residues Met-1–Ala-28. Cytochrome c domains lie at Asp-47–Gln-157 and Ser-200–Ser-345. Heme c-binding residues include Cys-69, Cys-72, His-73, Cys-215, Cys-218, and His-219.

The iodate reductase (Idr) complex is composed of a molybdopterin-dependent iodate reductase (IdrA and IdrB subunits) and two associated peroxidases (IdrP1 and IdrP2). Heme c is required as a cofactor.

The protein resides in the periplasm. The catalysed reaction is 2 Fe(II)-[cytochrome c] + H2O2 + 2 H(+) = 2 Fe(III)-[cytochrome c] + 2 H2O. In terms of biological role, involved in iodate respiration. May play a critical role in detoxification of inadvertent H(2)O(2) generated by the iodate reductase IdrA/IdrB. This chain is Cytochrome-c peroxidase IdrP2, found in Denitromonas iodatirespirans.